Reading from the N-terminus, the 504-residue chain is Cytochrome P450 6B7 (504 aa).

A heme-binding site is contributed by Cys-445.

The protein belongs to the cytochrome P450 family. Heme is required as a cofactor.

It localises to the endoplasmic reticulum membrane. The protein localises to the microsome membrane. The catalysed reaction is an organic molecule + reduced [NADPH--hemoprotein reductase] + O2 = an alcohol + oxidized [NADPH--hemoprotein reductase] + H2O + H(+). The sequence is that of Cytochrome P450 6B7 (CYP6B7) from Helicoverpa armigera (Cotton bollworm).